Consider the following 434-residue polypeptide: Arrestin domain-containing protein 1 (434 aa).

The tract at residues 292–349 (SPCPGRESSPGTLSLVVPSAPPQEEAEAVASGPHFSDPVSLSTKSHSQQQPLSAPLGS) is disordered. Polar residues predominate over residues 330–343 (VSLSTKSHSQQQPL). 2 consecutive short sequence motifs (PPxY motif) follow at residues 401–404 (PPEY) and 414–417 (PPSY).

It belongs to the arrestin family. Interacts (via PPxY motifs) with ITCH (via WW domains); the interaction is direct and participates in the recruitment of the ubiquitin-protein ligase ITCH to the NOTCH1 receptor. Interacts with ARRB1 and ARRB2; the interaction is direct. Interacts with TSG101; may recruit TSG101 to the plasma membrane. Interacts (via PPxY motifs) with WWP2 (via WW domains); ubiquitinates ARRDC1. Interacts with SLC11A2; controls the incorporation of SLC11A2 into extracellular vesicles through an ubiquitination-dependent mechanism. Interacts with WWP1 (via WW domains). Interacts with NEDD4 (via WW domains). Interacts with PDCD6IP. Post-translationally, ubiquitinated. Ubiquitination by WWP2; promotes localization to extracellular microvesicles. Ubiquitinated by WWP1.

The protein localises to the cell membrane. Functionally, functions as an adapter recruiting ubiquitin-protein ligases to their specific substrates. Through an ubiquitination-dependent mechanism plays for instance a role in the incorporation of SLC11A2 into extracellular vesicles. More generally, plays a role in the extracellular transport of proteins between cells through the release in the extracellular space of microvesicles. By participating to the ITCH-mediated ubiquitination and subsequent degradation of NOTCH1, negatively regulates the NOTCH signaling pathway. The sequence is that of Arrestin domain-containing protein 1 from Mus musculus (Mouse).